The sequence spans 328 residues: Diacetylchitobiose uptake system permease protein DasB (328 aa).

Residues 1-27 are disordered; the sequence is MTVQTERPPSGPSDVRKADGGGTGGTR. A run of 6 helical transmembrane segments spans residues 36 to 56, 104 to 124, 134 to 154, 188 to 208, 247 to 267, and 297 to 317; these read ALAP…LLGW, IIFT…IGLL, FVLM…ATTV, FSTF…FVAI, FLYA…VQVY, and MGAA…AYYL. The region spanning 100 to 316 is the ABC transmembrane type-1 domain; the sequence is TVRSIIFTAV…LILLGLTAYY (217 aa).

Belongs to the binding-protein-dependent transport system permease family. As to quaternary structure, the complex is composed of two ATP-binding proteins (MsiK), two transmembrane proteins (DasB and DasC) and a solute-binding protein (DasA).

It localises to the cell membrane. Part of the ABC transporter complex DasABC-MsiK involved in N,N'-diacetylchitobiose ((GlcNAc)2) uptake. Responsible for the translocation of the substrate across the membrane. The polypeptide is Diacetylchitobiose uptake system permease protein DasB (Streptomyces coelicolor (strain ATCC BAA-471 / A3(2) / M145)).